Reading from the N-terminus, the 455-residue chain is Periplasmic pH-dependent serine endoprotease DegQ (455 aa).

The N-terminal stretch at 1–27 (MKKQTQLLSALALSVGLTLSASFQAVA) is a signal peptide. Residues glutamate 59, histidine 109, aspartate 139, glycine 212, 212–214 (GNS), 230–234 (TAILA), and 269–273 (LGIKG) each bind substrate. Active-site charge relay system residues include histidine 109 and aspartate 139. Residue serine 214 is the Charge relay system of the active site. 2 PDZ domains span residues 258–349 (LIDF…LRNG) and 355–447 (EVTL…VRGN).

This sequence belongs to the peptidase S1C family. DegQ can reversibly switch between different oligomeric forms that represent inactive (6-mer) and active (12- and 24-mer) protease states. Substrate binding triggers the conversion of the resting DegQ trimer and hexamer into catalytically active 12- and 24-mers. The conversion of 6-mer (DegQ6) into 12-mer (DegQ12) or 24-mer (DegQ24) is crucial in regulating protease activity.

It is found in the periplasm. It catalyses the reaction Acts on substrates that are at least partially unfolded. The cleavage site P1 residue is normally between a pair of hydrophobic residues, such as Val-|-Val.. With respect to regulation, inhibited by diisopropylfluorophosphate (DFP). DegQ could degrade transiently denatured and unfolded proteins which accumulate in the periplasm following stress conditions. DegQ is efficient with Val-Xaa and Ile-Xaa peptide bonds, suggesting a preference for a beta-branched side chain amino acids. Only unfolded proteins devoid of disulfide bonds appear capable to be cleaved, thereby preventing non-specific proteolysis of folded proteins. DegQ can substitute for the periplasmic protease DegP. This chain is Periplasmic pH-dependent serine endoprotease DegQ (degQ), found in Escherichia coli (strain K12).